Here is a 360-residue protein sequence, read N- to C-terminus: MNTHRPIESVRAHEPAVLNAAFNQDQTCFAVCHESGFQVYNTDPMELRMKRTFSTNGGVGLIAMLHRTNYVALVGGGRQPRFPVNKLCIWDDLKKKPSIMLEFMSPILNVLLSRILIVVVLKNKVLIHAFESKPKLLAQHETYDNEAGVAELSVNEQTSFLAFPGRAIGQIQLVDVSPAHRDRNLISIIKAHKSRIQCLAISNSGLLIASASQTGTIIRIHDTAKCSLRFELRRGLDRATVTSIKFSPDDSKLAVLSDKNTLHVYNLTAADPQPESAMANRLHLLSAVPLMPTYFRSVWSFVSYHIDTKDDAVNDCGVLGWADNESIVVLWKKKGIWEKYVLVENDKWTLVREGWRRFEE.

WD repeat units lie at residues 12-50 (AHEP…LRMK), 191-231 (AHKS…LRFE), and 236-275 (LDRA…PQPE).

Belongs to the WD repeat PROPPIN family.

Its subcellular location is the vacuole membrane. It localises to the cytoplasmic vesicle membrane. In terms of biological role, involved in mitochondrial or peroxisomal functions and amino acid signaling pathways. The sequence is that of SVP1-like protein 2 (HSV2) from Pichia angusta (Yeast).